The primary structure comprises 405 residues: Probable dual-specificity RNA methyltransferase RlmN (405 aa).

Residues 1–15 are compositionally biased toward low complexity; it reads MSSTGSSVSTSGLVL. The interval 1-34 is disordered; that stretch reads MSSTGSSVSTSGLVLPSTPLAEPGKEVPLVVNTP. The Proton acceptor role is filled by glutamate 130. The Radical SAM core domain maps to 142 to 386; that stretch reads SAARATLCLS…VTVRDTRGSE (245 aa). Residues cysteine 149 and cysteine 391 are joined by a disulfide bond. Residues cysteine 156, cysteine 160, and cysteine 163 each coordinate [4Fe-4S] cluster. Residues 211-212, serine 245, 268-270, and asparagine 348 contribute to the S-adenosyl-L-methionine site; these read GE and SLH. The active-site S-methylcysteine intermediate is the cysteine 391.

The protein belongs to the radical SAM superfamily. RlmN family. [4Fe-4S] cluster serves as cofactor.

It is found in the cytoplasm. The catalysed reaction is adenosine(2503) in 23S rRNA + 2 reduced [2Fe-2S]-[ferredoxin] + 2 S-adenosyl-L-methionine = 2-methyladenosine(2503) in 23S rRNA + 5'-deoxyadenosine + L-methionine + 2 oxidized [2Fe-2S]-[ferredoxin] + S-adenosyl-L-homocysteine. It carries out the reaction adenosine(37) in tRNA + 2 reduced [2Fe-2S]-[ferredoxin] + 2 S-adenosyl-L-methionine = 2-methyladenosine(37) in tRNA + 5'-deoxyadenosine + L-methionine + 2 oxidized [2Fe-2S]-[ferredoxin] + S-adenosyl-L-homocysteine. Its function is as follows. Specifically methylates position 2 of adenine 2503 in 23S rRNA and position 2 of adenine 37 in tRNAs. This is Probable dual-specificity RNA methyltransferase RlmN from Cutibacterium acnes (strain DSM 16379 / KPA171202) (Propionibacterium acnes).